The following is a 168-amino-acid chain: Ribulose bisphosphate carboxylase small subunit, chloroplastic (168 aa).

The transit peptide at 1 to 28 directs the protein to the chloroplast; the sequence is MASIAAKSVSLRAATRRAAPVAAPADAR.

Belongs to the RuBisCO small chain family. In terms of assembly, heterohexadecamer of 8 large and 8 small subunits.

The protein resides in the plastid. The protein localises to the chloroplast. In terms of biological role, ruBisCO catalyzes two reactions: the carboxylation of D-ribulose 1,5-bisphosphate, the primary event in carbon dioxide fixation, as well as the oxidative fragmentation of the pentose substrate. Both reactions occur simultaneously and in competition at the same active site. Although the small subunit is not catalytic it is essential for maximal activity. The chain is Ribulose bisphosphate carboxylase small subunit, chloroplastic from Chlamydomonas moewusii (Chlamydomonas eugametos).